Here is a 490-residue protein sequence, read N- to C-terminus: JNK-interacting protein 1 (490 aa).

Disordered stretches follow at residues 1–71 and 213–254; these read MADS…DHEP and EDSS…PVSQ. A compositionally biased stretch (polar residues) spans 231-249; sequence GHSTAHSPNDFKSMSPQIT. An SH3 domain is found at 271 to 332; sequence MLEATHRGLH…PSAYAVDLDY (62 aa). The PID domain maps to 344–479; it reads KERYLLGYLG…FQRFYQKFIE (136 aa).

Belongs to the JIP scaffold family. As to quaternary structure, forms homo- and heterooligomeric complexes. Binds Hep, a dual specificity protein kinase in the JNK pathway, but not its downstream target bsk. The C-terminal region interacts with the kinesin light chain protein, Klc, and the C-terminal PTY motif of amyloid-beta protein precursor-like protein, Appl. In terms of tissue distribution, expressed in the brain, CNS, PNS and cells posterior to the morphogenetic furrow in the eye imaginal disk of late embryos.

The protein localises to the cytoplasm. Its function is as follows. The JNK-interacting protein (JIP) group of scaffold proteins selectively mediates JNK signaling by aggregating specific components of the MAPK cascade to form a functional JNK signaling module. May function as a regulator of vesicle transport, through interactions with the JNK-signaling components and motor proteins. The sequence is that of JNK-interacting protein 1 (Aplip1) from Drosophila melanogaster (Fruit fly).